Reading from the N-terminus, the 150-residue chain is Dual specificity protein phosphatase 23 (150 aa).

A Tyrosine-protein phosphatase domain is found at 7–150 (NFSWVLPGRL…AVFQFYQRTK (144 aa)). Cysteine 95 functions as the Phosphocysteine intermediate in the catalytic mechanism.

The protein belongs to the protein-tyrosine phosphatase family. Non-receptor class dual specificity subfamily. As to expression, widely expressed. Highly expressed in spleen, prostate, colon, adrenal gland, mammary gland, thyroid and trachea. Expressed at lower level in uterus, small intestine, bladder, bone marrow, brain, spinal cord and stomach.

It localises to the cytoplasm. The protein resides in the cytosol. Its subcellular location is the nucleus. It carries out the reaction O-phospho-L-tyrosyl-[protein] + H2O = L-tyrosyl-[protein] + phosphate. It catalyses the reaction O-phospho-L-seryl-[protein] + H2O = L-seryl-[protein] + phosphate. The catalysed reaction is O-phospho-L-threonyl-[protein] + H2O = L-threonyl-[protein] + phosphate. Protein phosphatase that mediates dephosphorylation of proteins phosphorylated on Tyr and Ser/Thr residues. In vitro, it can dephosphorylate p44-ERK1 (MAPK3) but not p54 SAPK-beta (MAPK10) in vitro. Able to enhance activation of JNK and p38 (MAPK14). This chain is Dual specificity protein phosphatase 23 (DUSP23), found in Homo sapiens (Human).